Reading from the N-terminus, the 564-residue chain is Diacylglycerol kinase epsilon (564 aa).

The helical transmembrane segment at L20–L40 threads the bilayer. 2 consecutive Phorbol-ester/DAG-type zinc fingers follow at residues K57 to C106 and P121 to C174. The DAGKc domain occupies K212–N353.

Belongs to the eukaryotic diacylglycerol kinase family. In terms of tissue distribution, highly expressed in brain and heart. In brain, highly expressed in Purkinje cells of the cerebellum, pyramidal cells of the hippocampus, mitral cells of the olfactory bulb, and neurons of the substantia nigra. Lower expression in neurons of the thalamus, superior olive, and lateral reticular nucleus is also detected. Expressed in platelets.

Its subcellular location is the membrane. The protein resides in the cytoplasm. The catalysed reaction is a 1,2-diacyl-sn-glycerol + ATP = a 1,2-diacyl-sn-glycero-3-phosphate + ADP + H(+). It catalyses the reaction 1-hexadecanoyl-2-(5Z,8Z,11Z,14Z-eicosatetraenoyl)-sn-glycerol + ATP = 1-hexadecanoyl-2-(5Z,8Z,11Z,14Z-eicosatetraenoyl)-sn-glycero-3-phosphate + ADP + H(+). The enzyme catalyses 1-octadecanoyl-2-(5Z,8Z,11Z,14Z-eicosatetraenoyl)-sn-glycerol + ATP = 1-octadecanoyl-2-(5Z,8Z,11Z,14Z-eicosatetraenoyl)-sn-glycero-3-phosphate + ADP + H(+). It carries out the reaction 1-eicosanoyl-2-(5Z,8Z,11Z,14Z)-eicosatetraenoyl-sn-glycerol + ATP = 1-eicosanoyl-2-(5Z,8Z,11Z,14Z)-eicosatetraenoyl-sn-glycero-3-phosphate + ADP + H(+). The catalysed reaction is 1,2-di-(5Z,8Z,11Z,14Z)-eicosatetraenoyl-sn-glycerol + ATP = 1,2-di-(5Z,8Z,11Z,14Z)-eicosatetraenoyl-sn-glycero-3-phosphate + ADP + H(+). It catalyses the reaction 1-octadecanoyl-2-(9Z,12Z)-octadecadienoyl-sn-glycerol + ATP = 1-octadecanoyl-2-(9Z,12Z-octadecadienoyl)-sn-glycero-3-phosphate + ADP + H(+). The enzyme catalyses 1,2-di-(9Z,12Z-octadecadienoyl)-sn-glycerol + ATP = 1,2-di-(9Z,12Z-octadecadienoyl)-sn-glycero-3-phosphate + ADP + H(+). It carries out the reaction 1,2-di-(9Z-octadecenoyl)-sn-glycerol + ATP = 1,2-di-(9Z-octadecenoyl)-sn-glycero-3-phosphate + ADP + H(+). The protein operates within lipid metabolism; glycerolipid metabolism. Membrane-bound diacylglycerol kinase that converts diacylglycerol/DAG into phosphatidic acid/phosphatidate/PA and regulates the respective levels of these two bioactive lipids. Thereby, acts as a central switch between the signaling pathways activated by these second messengers with different cellular targets and opposite effects in numerous biological processes. Also plays an important role in the biosynthesis of complex lipids. Displays specificity for diacylglycerol substrates with an arachidonoyl acyl chain at the sn-2 position, with the highest activity toward 1-octadecanoyl-2-(5Z,8Z,11Z,14Z-eicosatetraenoyl)-sn-glycerol the main diacylglycerol intermediate within the phosphatidylinositol turnover cycle. Can also phosphorylate diacylglycerol substrates with a linoleoyl acyl chain at the sn-2 position but much less efficiently. This Mus musculus (Mouse) protein is Diacylglycerol kinase epsilon (Dgke).